The chain runs to 256 residues: Imidazole glycerol phosphate synthase subunit HisF (256 aa).

Residues aspartate 13 and aspartate 132 contribute to the active site.

It belongs to the HisA/HisF family. Heterodimer of HisH and HisF.

Its subcellular location is the cytoplasm. It carries out the reaction 5-[(5-phospho-1-deoxy-D-ribulos-1-ylimino)methylamino]-1-(5-phospho-beta-D-ribosyl)imidazole-4-carboxamide + L-glutamine = D-erythro-1-(imidazol-4-yl)glycerol 3-phosphate + 5-amino-1-(5-phospho-beta-D-ribosyl)imidazole-4-carboxamide + L-glutamate + H(+). It participates in amino-acid biosynthesis; L-histidine biosynthesis; L-histidine from 5-phospho-alpha-D-ribose 1-diphosphate: step 5/9. Functionally, IGPS catalyzes the conversion of PRFAR and glutamine to IGP, AICAR and glutamate. The HisF subunit catalyzes the cyclization activity that produces IGP and AICAR from PRFAR using the ammonia provided by the HisH subunit. The chain is Imidazole glycerol phosphate synthase subunit HisF from Leptospira borgpetersenii serovar Hardjo-bovis (strain JB197).